An 85-amino-acid chain; its full sequence is UPF0386 protein RHE_CH01859 (85 aa).

It belongs to the UPF0386 family.

The chain is UPF0386 protein RHE_CH01859 from Rhizobium etli (strain ATCC 51251 / DSM 11541 / JCM 21823 / NBRC 15573 / CFN 42).